Reading from the N-terminus, the 421-residue chain is UDP-N-acetylglucosamine 1-carboxyvinyltransferase (421 aa).

22–23 (KN) contributes to the phosphoenolpyruvate binding site. R92 is a UDP-N-acetyl-alpha-D-glucosamine binding site. The Proton donor role is filled by C116. C116 bears the 2-(S-cysteinyl)pyruvic acid O-phosphothioketal mark. UDP-N-acetyl-alpha-D-glucosamine-binding residues include D306 and V328.

This sequence belongs to the EPSP synthase family. MurA subfamily.

The protein resides in the cytoplasm. It catalyses the reaction phosphoenolpyruvate + UDP-N-acetyl-alpha-D-glucosamine = UDP-N-acetyl-3-O-(1-carboxyvinyl)-alpha-D-glucosamine + phosphate. It participates in cell wall biogenesis; peptidoglycan biosynthesis. Functionally, cell wall formation. Adds enolpyruvyl to UDP-N-acetylglucosamine. The chain is UDP-N-acetylglucosamine 1-carboxyvinyltransferase from Thermotoga petrophila (strain ATCC BAA-488 / DSM 13995 / JCM 10881 / RKU-1).